A 140-amino-acid chain; its full sequence is Phosphopantetheine adenylyltransferase (140 aa).

S9 contacts substrate. ATP-binding positions include 9 to 10 (SF) and H17. Residues K41, T74, and R88 each coordinate substrate. ATP contacts are provided by residues 89–91 (GLR), E99, and 124–130 (KRSLSST).

It belongs to the bacterial CoaD family. Homohexamer. Mg(2+) serves as cofactor.

The protein localises to the cytoplasm. The enzyme catalyses (R)-4'-phosphopantetheine + ATP + H(+) = 3'-dephospho-CoA + diphosphate. The protein operates within cofactor biosynthesis; coenzyme A biosynthesis; CoA from (R)-pantothenate: step 4/5. In terms of biological role, reversibly transfers an adenylyl group from ATP to 4'-phosphopantetheine, yielding dephospho-CoA (dPCoA) and pyrophosphate. In Mycoplasma mycoides subsp. mycoides SC (strain CCUG 32753 / NCTC 10114 / PG1), this protein is Phosphopantetheine adenylyltransferase.